An 828-amino-acid polypeptide reads, in one-letter code: Periplasmic nitrate reductase (828 aa).

The segment at residues 1 to 31 is a signal peptide (tat-type signal); that stretch reads MKLSRRSFMKANAVAAAAAAAGLSVPGVARA. In terms of domain architecture, 4Fe-4S Mo/W bis-MGD-type spans 39–95; that stretch reads IKWDKAPCRFCGTGCGVLVGTQQGRVVACQGDPDAPVNRGLNCIKGYFLPKIMYGKD. 4 residues coordinate [4Fe-4S] cluster: cysteine 46, cysteine 49, cysteine 53, and cysteine 81. Mo-bis(molybdopterin guanine dinucleotide)-binding positions include lysine 83, glutamine 150, asparagine 175, cysteine 179, 212–219, 243–247, 262–264, methionine 372, glutamine 376, asparagine 482, 508–509, lysine 531, aspartate 558, and 718–727; these read WGANMAEM, STYQH, QSD, SD, and TGRVLEHWHT. Phenylalanine 794 serves as a coordination point for substrate. Mo-bis(molybdopterin guanine dinucleotide)-binding residues include asparagine 802 and lysine 819.

The protein belongs to the prokaryotic molybdopterin-containing oxidoreductase family. NasA/NapA/NarB subfamily. Component of the periplasmic nitrate reductase NapAB complex composed of NapA and NapB. [4Fe-4S] cluster is required as a cofactor. The cofactor is Mo-bis(molybdopterin guanine dinucleotide). Post-translationally, predicted to be exported by the Tat system. The position of the signal peptide cleavage has not been experimentally proven.

The protein resides in the periplasm. It carries out the reaction 2 Fe(II)-[cytochrome] + nitrate + 2 H(+) = 2 Fe(III)-[cytochrome] + nitrite + H2O. In terms of biological role, catalytic subunit of the periplasmic nitrate reductase complex NapAB. Receives electrons from NapB and catalyzes the reduction of nitrate to nitrite. This Escherichia coli O6:K15:H31 (strain 536 / UPEC) protein is Periplasmic nitrate reductase.